Reading from the N-terminus, the 588-residue chain is BTB/POZ domain-containing protein At3g26490 (588 aa).

One can recognise a BTB domain in the interval 28-99; it reads NDLVIQVKST…CYGITITLCA (72 aa). The NPH3 domain maps to 218–507; that stretch reads RWWGEDLAEL…VQILFVEQAR (290 aa). Phosphoserine is present on residues serine 376 and serine 378. At tyrosine 448 the chain carries Phosphotyrosine. The interval 529–554 is disordered; sequence FTTRREEGGQEEEERDETKPSGGFLQ.

This sequence belongs to the NPH3 family.

It functions in the pathway protein modification; protein ubiquitination. Functionally, may act as a substrate-specific adapter of an E3 ubiquitin-protein ligase complex (CUL3-RBX1-BTB) which mediates the ubiquitination and subsequent proteasomal degradation of target proteins. This Arabidopsis thaliana (Mouse-ear cress) protein is BTB/POZ domain-containing protein At3g26490.